The chain runs to 525 residues: GMP synthase [glutamine-hydrolyzing] (525 aa).

Positions 9 to 207 (RILILDFGSQ…VLGICGCEAL (199 aa)) constitute a Glutamine amidotransferase type-1 domain. The active-site Nucleophile is the Cys-86. Active-site residues include His-181 and Glu-183. In terms of domain architecture, GMPS ATP-PPase spans 208–400 (WTSATIIEDA…LGLPYDMLYR (193 aa)). 235 to 241 (SGGVDSS) contributes to the ATP binding site.

In terms of assembly, homodimer.

It catalyses the reaction XMP + L-glutamine + ATP + H2O = GMP + L-glutamate + AMP + diphosphate + 2 H(+). It participates in purine metabolism; GMP biosynthesis; GMP from XMP (L-Gln route): step 1/1. Catalyzes the synthesis of GMP from XMP. In Yersinia pseudotuberculosis serotype IB (strain PB1/+), this protein is GMP synthase [glutamine-hydrolyzing].